The primary structure comprises 400 residues: D(3) dopamine receptor (400 aa).

Over 1–32 (MASLSQLSGHLNYTCGAENSTGASQARPHAYY) the chain is Extracellular. N-linked (GlcNAc...) asparagine glycosylation is found at Asn-12 and Asn-19. The chain crosses the membrane as a helical span at residues 33-55 (ALSYCALILAIVFGNGLVCMAVL). Residues 56-65 (KERALQTTTN) lie on the Cytoplasmic side of the membrane. The helical transmembrane segment at 66–88 (YLVVSLAVADLLVATLVMPWVVY) threads the bilayer. Over 89–104 (LEVTGGVWNFSRICCD) the chain is Extracellular. Asn-97 is a glycosylation site (N-linked (GlcNAc...) asparagine). Cys-103 and Cys-181 are oxidised to a cystine. A helical transmembrane segment spans residues 105-126 (VFVTLDVMMCTASILNLCAISI). Asp-110 contributes to the eticlopride binding site. At 127–149 (DRYTAVVMPVHYQHGTGQSSCRR) the chain is on the cytoplasmic side. The helical transmembrane segment at 150–170 (VALMITAVWVLAFAVSCPLLF) threads the bilayer. Residues 171–187 (GFNTTGDPTVCSISNPD) are Extracellular-facing. N-linked (GlcNAc...) asparagine glycosylation is present at Asn-173. A helical transmembrane segment spans residues 188 to 209 (FVIYSSVVSFYLPFGVTVLVYA). Residues 210-329 (RIYVVLKQRR…VPLREKKATQ (120 aa)) lie on the Cytoplasmic side of the membrane. Residues 330 to 351 (MVAIVLGAFIVCWLPFFLTHVL) traverse the membrane as a helical segment. Residues Phe-345 and His-349 each contribute to the eticlopride site. Residues 352 to 366 (NTHCQTCHVSPELYS) are Extracellular-facing. Cysteines 355 and 358 form a disulfide. Residues 367–386 (ATTWLGYVNSALNPVIYTTF) form a helical membrane-spanning segment. Residues 387–400 (NIEFRKAFLKILSC) are Cytoplasmic-facing.

The protein belongs to the G-protein coupled receptor 1 family. In terms of assembly, interacts with CLIC6. Interacts with GRK4. Interacts with PALM. Interacts with FLNA (via filamin repeat 21); increases PKA-mediated phosphorylation of FLNA. In terms of processing, phosphorylated by GRK4 (GRK4-alpha and GRK4-gamma). Palmitoylated. In terms of tissue distribution, brain.

The protein localises to the cell membrane. Its function is as follows. Dopamine receptor whose activity is mediated by G proteins which inhibit adenylyl cyclase. Promotes cell proliferation. The polypeptide is D(3) dopamine receptor (Homo sapiens (Human)).